A 299-amino-acid chain; its full sequence is MRVDTRKCKGRMMQDLNEIFETIKSVAKEISEVIKYADLGYTTHENATGDTQLKLDVQSDEIITAKFKALSCVKALVSEEKDEILPINTNGKFIIAYDPLDGSSLVDVNFAVGSIFGIYENELKPQNLIAAAYSIYGPRLELVINDKKGTKPKFYRLGKDGNFKFVRELELAQKGKLNATGATQKGWSKTHRNFINELFDEGYRLRYSGAMVSDLHQILLKGGGLFSYPATSDHPNGKLRLLFEVLPFAFIYENAGGTTSDGKSDTLFDVNITKTHQTSPCFFGSASEIALLHKFYGKD.

Residues Glu-79, Asp-98, Leu-100, and Asp-101 each contribute to the Mg(2+) site. Substrate is bound by residues 101–104 (DGSS), Tyr-207, and Lys-238. Mg(2+) is bound at residue Glu-244.

This sequence belongs to the FBPase class 1 family. As to quaternary structure, homotetramer. Requires Mg(2+) as cofactor.

It localises to the cytoplasm. The enzyme catalyses beta-D-fructose 1,6-bisphosphate + H2O = beta-D-fructose 6-phosphate + phosphate. It participates in carbohydrate biosynthesis; gluconeogenesis. This chain is Fructose-1,6-bisphosphatase class 1, found in Campylobacter curvus (strain 525.92).